The following is a 126-amino-acid chain: Small ribosomal subunit protein uS13 (126 aa).

A disordered region spans residues 98 to 126 (VRGQSTKNNARTRKGKRKTVANKKKAAKK). Basic residues predominate over residues 107 to 126 (ARTRKGKRKTVANKKKAAKK).

The protein belongs to the universal ribosomal protein uS13 family. Part of the 30S ribosomal subunit. Forms a loose heterodimer with protein S19. Forms two bridges to the 50S subunit in the 70S ribosome.

Located at the top of the head of the 30S subunit, it contacts several helices of the 16S rRNA. In the 70S ribosome it contacts the 23S rRNA (bridge B1a) and protein L5 of the 50S subunit (bridge B1b), connecting the 2 subunits; these bridges are implicated in subunit movement. Contacts the tRNAs in the A and P-sites. This is Small ribosomal subunit protein uS13 from Amoebophilus asiaticus (strain 5a2).